The primary structure comprises 410 residues: LanC-like protein GCR2 (410 aa).

Cys283, Cys328, and His329 together coordinate Zn(2+).

It belongs to the LanC-like protein family. In terms of assembly, may interact (via C-terminus) with GPA1.

In terms of biological role, may play a role in abscisic acid (ABA) signaling. This Arabidopsis thaliana (Mouse-ear cress) protein is LanC-like protein GCR2 (GCR2).